We begin with the raw amino-acid sequence, 379 residues long: Probable pectin lyase A (379 aa).

Positions 1-20 (MKYSTIFSAAAAVFAGSAAA) are cleaved as a signal peptide. 2 disulfides stabilise this stretch: Cys83–Cys102 and Cys92–Cys226. The N-linked (GlcNAc...) asparagine glycan is linked to Asn129. Arg256 is an active-site residue. Residues Cys322 and Cys330 are joined by a disulfide bond.

The protein belongs to the polysaccharide lyase 1 family.

It is found in the secreted. It carries out the reaction Eliminative cleavage of (1-&gt;4)-alpha-D-galacturonan methyl ester to give oligosaccharides with 4-deoxy-6-O-methyl-alpha-D-galact-4-enuronosyl groups at their non-reducing ends.. In terms of biological role, pectinolytic enzymes consist of four classes of enzymes: pectin lyase, polygalacturonase, pectin methylesterase and rhamnogalacturonase. Among pectinolytic enzymes, pectin lyase is the most important in depolymerization of pectin, since it cleaves internal glycosidic bonds of highly methylated pectins. This Aspergillus niger (strain ATCC MYA-4892 / CBS 513.88 / FGSC A1513) protein is Probable pectin lyase A (pelA).